The sequence spans 214 residues: Epoxide hydrolase EphH (214 aa).

The active-site Nucleophile is serine 28. Active-site charge relay system residues include aspartate 156 and histidine 186.

This sequence belongs to the AB hydrolase superfamily.

It carries out the reaction an epoxide + H2O = an ethanediol. Inhibited by AUDA, a known epoxide hydrolase inhibitor. Catalyzes the hydrolysis of epoxide-containing substrates. In vitro, catalyzes the hydrolysis of the synthetic compounds PHOME and styrene oxide. Plays an essential role in subverting phagosomal acidification. Plays a major role in the survival of M.tuberculosis (Mtb) during in vitro acidic stress and protects Mtb in response to phagosomal acidification inside macrophages. Also supports Mtb growth under the nutrient-deprived condition at pH 7.0. This Mycobacterium tuberculosis (strain ATCC 25618 / H37Rv) protein is Epoxide hydrolase EphH.